The following is a 184-amino-acid chain: Trichothecene 15-O-acetyltransferase SAT16 (184 aa).

His154 contributes to the substrate binding site.

It belongs to the trichothecene O-acetyltransferase family.

It functions in the pathway mycotoxin biosynthesis. Its function is as follows. Trichothecene 15-O-acetyltransferase; part of the satratoxin SC2 cluster involved in the biosynthesis of satratoxins, trichothecene mycotoxins that are associated with human food poisonings. Satratoxins are suggested to be made by products of multiple gene clusters (SC1, SC2 and SC3) that encode 21 proteins in all, including polyketide synthases, acetyltransferases, and other enzymes expected to modify the trichothecene skeleton. SC1 encodes 10 proteins, SAT1 to SAT10. The largest are SAT8, which encodes a putative polyketide synthase (PKS) with a conventional non-reducing architecture, and SAT10, a putative protein containing four ankyrin repeats and thus may be involved in protein scaffolding. The putative short-chain reductase SAT3 may assist the PKS in some capacity. SAT6 contains a secretory lipase domain and acts probably as a trichothecene esterase. SAT5 encodes a putative acetyltransferase, and so, with SAT6, may affect endogenous protection from toxicity. The probable transcription factor SAT9 may regulate the expression of the SC1 cluster. SC2 encodes proteins SAT11 to SAT16, the largest of which encodes the putative reducing PKS SAT13. SAT11 is a cytochrome P450 monooxygenase, while SAT14 and SAT16 are probable acetyltransferases. The SC2 cluster may be regulated by the transcription factor SAT15. SC3 is a small cluster that encodes 5 proteins, SAT17 to SAT21. SAT21 is a putative MFS-type transporter which may have a role in exporting secondary metabolites. The four other proteins putatively encoded in SC3 include the taurine hydroxylase-like protein SAT17, the O-methyltransferase SAT18, the acetyltransferase SAT19, and the Cys6-type zinc finger SAT20, the latter being probably involved in regulation of SC3 expression. This Stachybotrys chartarum (strain CBS 109288 / IBT 7711) (Toxic black mold) protein is Trichothecene 15-O-acetyltransferase SAT16.